Here is a 327-residue protein sequence, read N- to C-terminus: GMP reductase (327 aa).

Cysteine 176 serves as the catalytic Thioimidate intermediate. 205 to 228 (IIADGGIRTHGDIAKSIRFGATMV) contacts NADP(+).

It belongs to the IMPDH/GMPR family. GuaC type 2 subfamily.

The enzyme catalyses IMP + NH4(+) + NADP(+) = GMP + NADPH + 2 H(+). Catalyzes the irreversible NADPH-dependent deamination of GMP to IMP. It functions in the conversion of nucleobase, nucleoside and nucleotide derivatives of G to A nucleotides, and in maintaining the intracellular balance of A and G nucleotides. The protein is GMP reductase of Streptococcus equi subsp. equi (strain 4047).